The chain runs to 84 residues: Small ribosomal subunit protein bS18 (84 aa).

It belongs to the bacterial ribosomal protein bS18 family. Part of the 30S ribosomal subunit. Forms a tight heterodimer with protein bS6.

Binds as a heterodimer with protein bS6 to the central domain of the 16S rRNA, where it helps stabilize the platform of the 30S subunit. The polypeptide is Small ribosomal subunit protein bS18 (Methylorubrum extorquens (strain CM4 / NCIMB 13688) (Methylobacterium extorquens)).